The sequence spans 587 residues: 2-succinyl-5-enolpyruvyl-6-hydroxy-3-cyclohexene-1-carboxylate synthase (587 aa).

This sequence belongs to the TPP enzyme family. MenD subfamily. Homodimer. It depends on Mg(2+) as a cofactor. Mn(2+) is required as a cofactor. Thiamine diphosphate serves as cofactor.

The enzyme catalyses isochorismate + 2-oxoglutarate + H(+) = 5-enolpyruvoyl-6-hydroxy-2-succinyl-cyclohex-3-ene-1-carboxylate + CO2. Its pathway is quinol/quinone metabolism; 1,4-dihydroxy-2-naphthoate biosynthesis; 1,4-dihydroxy-2-naphthoate from chorismate: step 2/7. The protein operates within cofactor biosynthesis; phylloquinone biosynthesis. Its function is as follows. Catalyzes the thiamine diphosphate-dependent decarboxylation of 2-oxoglutarate and the subsequent addition of the resulting succinic semialdehyde-thiamine pyrophosphate anion to isochorismate to yield 2-succinyl-5-enolpyruvyl-6-hydroxy-3-cyclohexene-1-carboxylate (SEPHCHC). This Prochlorococcus marinus (strain MIT 9312) protein is 2-succinyl-5-enolpyruvyl-6-hydroxy-3-cyclohexene-1-carboxylate synthase.